A 310-amino-acid polypeptide reads, in one-letter code: Putative S-adenosyl-L-methionine-dependent methyltransferase MMAR_0356 (310 aa).

S-adenosyl-L-methionine contacts are provided by residues Asp137 and 166–167 (DL).

The protein belongs to the UPF0677 family.

Functionally, exhibits S-adenosyl-L-methionine-dependent methyltransferase activity. In Mycobacterium marinum (strain ATCC BAA-535 / M), this protein is Putative S-adenosyl-L-methionine-dependent methyltransferase MMAR_0356.